Here is a 91-residue protein sequence, read N- to C-terminus: Dynein light chain 1, cytoplasmic (91 aa).

It belongs to the dynein light chain family. Homodimer. Cytoplasmic dynein consists of two catalytic heavy chains (HCs) and a number of non-catalytic subunits which present intermediate chains (ICs), light intermediate chains (LICs) and light chains (LCs). Component of the nuclear pore complex (NPC). NPC constitutes the exclusive means of nucleocytoplasmic transport. NPCs allow the passive diffusion of ions and small molecules and the active, nuclear transport receptor-mediated bidirectional transport of macromolecules such as proteins, RNAs, ribonucleoparticles (RNPs), and ribosomal subunits across the nuclear envelope. Due to its 8-fold rotational symmetry, all subunits are present with 8 copies or multiples thereof.

The protein localises to the cytoplasm. It is found in the cytoskeleton. It localises to the nucleus. Its subcellular location is the nuclear pore complex. Its function is as follows. Acts as one of several non-catalytic accessory components of the cytoplasmic dynein complex that are thought to be involved in linking dynein to cargos and to adapter proteins that regulate dynein function. Cytoplasmic dynein 1 acts as a motor for the intracellular retrograde motility of vesicles and organelles along microtubules. May play a role in changing or maintaining the spatial distribution of cytoskeletal structures. Also a component of the nuclear pore complex. This chain is Dynein light chain 1, cytoplasmic (DYN2), found in Debaryomyces hansenii (strain ATCC 36239 / CBS 767 / BCRC 21394 / JCM 1990 / NBRC 0083 / IGC 2968) (Yeast).